The chain runs to 486 residues: MPQLRDSGTRSLHATEPVPSAEMDGFCRIFGVETEYGVAVTGAERPVDAGQVAMTMFQPIVSRSRSTNTYLANGSRLYLDVGSHPEYATAEARDPREALAQDLAGEHVMRNLALKAQRKLRESYGAHATIHVFKNNVDSAGHAFGCHENYLVRRFVPLETIEHQLLPFLITRQLYTGAGRMTPDGFQITQRADFLDEAVSSATTRSRPMVNTRDEPHADPDSFRRLHVIIGDSNRSQWSTWMKLAVTHLVLCAIEDAFRHGVPSGFEQYAFADPAAANRTVSRFLDNPRAELTLESGESVSALGLQRRYYAAVKAFIETHGDALAGSLPATTIDTIMGEWSRVLDALERGAYDALADRVDWAAKKCLFDALKRRRPDVTFAQMEQLELDYHDIANGRLYGSLVARNQMRELLTGDNVEYAVHNPPTDTRAALRGRFVDAALNVGAQFSADWTHLTLTAPERREAILLDPFEAEPTLGFEQLMEALN.

Position 33 (E33) interacts with Mg(2+). An ATP-binding site is contributed by R76. Y78 serves as a coordination point for Mg(2+). The active-site Proton acceptor is D80. E86 is a Mg(2+) binding site. ATP contacts are provided by T89 and W451.

It belongs to the Pup ligase/Pup deamidase family. Pup-conjugating enzyme subfamily.

It carries out the reaction ATP + [prokaryotic ubiquitin-like protein]-L-glutamate + [protein]-L-lysine = ADP + phosphate + N(6)-([prokaryotic ubiquitin-like protein]-gamma-L-glutamyl)-[protein]-L-lysine.. It participates in protein degradation; proteasomal Pup-dependent pathway. The protein operates within protein modification; protein pupylation. In terms of biological role, catalyzes the covalent attachment of the prokaryotic ubiquitin-like protein modifier Pup to the proteasomal substrate proteins, thereby targeting them for proteasomal degradation. This tagging system is termed pupylation. The ligation reaction involves the side-chain carboxylate of the C-terminal glutamate of Pup and the side-chain amino group of a substrate lysine. The chain is Pup--protein ligase from Bifidobacterium longum (strain NCC 2705).